The chain runs to 480 residues: Protein nucleotidyltransferase YdiU (480 aa).

Positions 86, 88, 89, 109, 121, 122, 172, and 179 each coordinate ATP. The Proton acceptor role is filled by D248. Positions 249 and 258 each coordinate Mg(2+). D258 is an ATP binding site.

Belongs to the SELO family. Requires Mg(2+) as cofactor. Mn(2+) is required as a cofactor.

The catalysed reaction is L-seryl-[protein] + ATP = 3-O-(5'-adenylyl)-L-seryl-[protein] + diphosphate. It carries out the reaction L-threonyl-[protein] + ATP = 3-O-(5'-adenylyl)-L-threonyl-[protein] + diphosphate. The enzyme catalyses L-tyrosyl-[protein] + ATP = O-(5'-adenylyl)-L-tyrosyl-[protein] + diphosphate. It catalyses the reaction L-histidyl-[protein] + UTP = N(tele)-(5'-uridylyl)-L-histidyl-[protein] + diphosphate. The catalysed reaction is L-seryl-[protein] + UTP = O-(5'-uridylyl)-L-seryl-[protein] + diphosphate. It carries out the reaction L-tyrosyl-[protein] + UTP = O-(5'-uridylyl)-L-tyrosyl-[protein] + diphosphate. Nucleotidyltransferase involved in the post-translational modification of proteins. It can catalyze the addition of adenosine monophosphate (AMP) or uridine monophosphate (UMP) to a protein, resulting in modifications known as AMPylation and UMPylation. The protein is Protein nucleotidyltransferase YdiU of Salmonella typhi.